The sequence spans 443 residues: Packaging protein 1 (443 aa).

A disordered region spans residues 1 to 75; it reads MSGAADGTVP…PEAAQPPPSR (75 aa). The span at 13–56 shows a compositional bias: basic and acidic residues; the sequence is EDTHQEDSGERECEQRPVHSGREATGESDPALERPDHGERHGPE. 169 to 176 lines the ATP pocket; the sequence is GPTGSGKS. Residues 433-443 form a DNA-binding region; that stretch reads VSYANKRKWYD.

The protein belongs to the adenoviridae packaging protein 1 family. Homodimer. Part of a genome packaging complex composed of packaging proteins 1, 2 and 3; this complex specifically binds to the packaging sequence on the left end of viral genomic DNA and performs packaging of the viral genome. Interacts with protein 33K.

It localises to the virion. Its subcellular location is the host nucleus. The protein localises to the host nucleoplasm. The protein resides in the host nucleolus. Component of the packaging machinery which encapsidates the viral DNA into preformed capsids and transcriptional activator of the viral major late promoter (MLP). Binds, along with packaging proteins 2 and 3, to the specific packaging sequence on the left end of viral genomic DNA and displays ATPase activity thereby providing the power stroke of the packaging machinery. The activity of packaging protein IVa2 is stimulated by protein 33K which acts as a terminase. May be the protein that pumps DNA into the capsid powered by ATP hydrolysis. Specifically binds to the 5'-CG-3' nucleotides of the repeats making up the packaging sequence. Component of the DEF-A and DEF-B transcription factors that bind downstream elements of the major late promoter (MLP), and stimulate transcription from the MLP after initiation of viral DNA replication. DEF-A is a heterodimer packaging proteins 1 and 2 and DEF-B is a homodimer of packaging protein 1. The polypeptide is Packaging protein 1 (Pantherophis guttatus (Corn snake)).